Here is a 502-residue protein sequence, read N- to C-terminus: Pentatricopeptide repeat-containing protein At4g01990, mitochondrial (502 aa).

Residues 1–13 constitute a mitochondrion transit peptide; the sequence is MMHSVSRLARRFC. 7 PPR repeats span residues 139 to 173, 174 to 208, 209 to 243, 245 to 275, 280 to 310, 315 to 345, and 350 to 381; these read NQST…NHVS, NSLP…SITP, CDIT…GEGI, SWNT…LENN, VRDC…LKKR, NNSS…WEST, and DMRM…MKKC.

The protein belongs to the PPR family. P subfamily.

It is found in the mitochondrion. The polypeptide is Pentatricopeptide repeat-containing protein At4g01990, mitochondrial (Arabidopsis thaliana (Mouse-ear cress)).